Reading from the N-terminus, the 85-residue chain is Omega-conotoxin-like Am6.5 (85 aa).

The first 19 residues, 1–19 (MCILIVAVLFLTAWTFVMA), serve as a signal peptide directing secretion. Residues 20 to 53 (DDPRDEPDTVVRGGKLFSRARDEMNPAASKLNER) constitute a propeptide that is removed on maturation. Cystine bridges form between C55/C73, C62/C77, and C72/C81. Q84 is subject to Glutamine amide.

This sequence belongs to the conotoxin O1 family. Post-translationally, is not hydroxylated. As to expression, expressed by the venom duct.

It localises to the secreted. Its function is as follows. Omega-conotoxins act at presynaptic membranes, they bind and block voltage-gated calcium channels (Cav). The protein is Omega-conotoxin-like Am6.5 of Conus amadis (Amadis cone).